Consider the following 337-residue polypeptide: tRNA N6-adenosine threonylcarbamoyltransferase (337 aa).

H111 and H115 together coordinate Fe cation. Residues 134-138, D167, G180, and N272 each bind substrate; that span reads LVSGG. D300 lines the Fe cation pocket.

Belongs to the KAE1 / TsaD family. The cofactor is Fe(2+).

It localises to the cytoplasm. The catalysed reaction is L-threonylcarbamoyladenylate + adenosine(37) in tRNA = N(6)-L-threonylcarbamoyladenosine(37) in tRNA + AMP + H(+). Functionally, required for the formation of a threonylcarbamoyl group on adenosine at position 37 (t(6)A37) in tRNAs that read codons beginning with adenine. Is involved in the transfer of the threonylcarbamoyl moiety of threonylcarbamoyl-AMP (TC-AMP) to the N6 group of A37, together with TsaE and TsaB. TsaD likely plays a direct catalytic role in this reaction. This chain is tRNA N6-adenosine threonylcarbamoyltransferase, found in Pseudoalteromonas translucida (strain TAC 125).